The chain runs to 104 residues: Cytochrome c-551 (104 aa).

A signal peptide spans 1-22; the sequence is MKKILIPMLALGGALAMQPALA. Heme c is bound by residues Cys-34, Cys-37, His-38, and Met-83.

In terms of processing, binds 1 heme c group covalently per subunit.

Its subcellular location is the periplasm. In terms of biological role, electron donor for cytochrome cd1 in nitrite and nitrate respiration. This chain is Cytochrome c-551 (nirM), found in Stutzerimonas stutzeri (Pseudomonas stutzeri).